The chain runs to 558 residues: CTP synthase (558 aa).

The tract at residues 1-267 (MTKFVFVTGG…AQQTLELLNL (267 aa)) is amidoligase domain. Ser13 contacts CTP. Ser13 is a binding site for UTP. ATP-binding positions include 14 to 19 (SIGKGI) and Asp71. Residues Asp71 and Glu141 each contribute to the Mg(2+) site. CTP-binding positions include 148-150 (DIE), 188-193 (KTKPTQ), and Lys224. UTP contacts are provided by residues 188-193 (KTKPTQ) and Lys224. In terms of domain architecture, Glutamine amidotransferase type-1 spans 292–534 (EVALVGKYVQ…VKASVDYNHV (243 aa)). Gly354 contacts L-glutamine. Cys381 acts as the Nucleophile; for glutamine hydrolysis in catalysis. Residues 382–385 (MGMQ), Glu405, and Arg462 contribute to the L-glutamine site. Active-site residues include His507 and Glu509.

It belongs to the CTP synthase family. As to quaternary structure, homotetramer.

The catalysed reaction is UTP + L-glutamine + ATP + H2O = CTP + L-glutamate + ADP + phosphate + 2 H(+). The enzyme catalyses L-glutamine + H2O = L-glutamate + NH4(+). It carries out the reaction UTP + NH4(+) + ATP = CTP + ADP + phosphate + 2 H(+). It functions in the pathway pyrimidine metabolism; CTP biosynthesis via de novo pathway; CTP from UDP: step 2/2. Allosterically activated by GTP, when glutamine is the substrate; GTP has no effect on the reaction when ammonia is the substrate. The allosteric effector GTP functions by stabilizing the protein conformation that binds the tetrahedral intermediate(s) formed during glutamine hydrolysis. Inhibited by the product CTP, via allosteric rather than competitive inhibition. Its function is as follows. Catalyzes the ATP-dependent amination of UTP to CTP with either L-glutamine or ammonia as the source of nitrogen. Regulates intracellular CTP levels through interactions with the four ribonucleotide triphosphates. The protein is CTP synthase of Gloeothece citriformis (strain PCC 7424) (Cyanothece sp. (strain PCC 7424)).